A 459-amino-acid polypeptide reads, in one-letter code: tRNA modification GTPase MnmE (459 aa).

Residues Arg23, Glu88, and Arg127 each contribute to the (6S)-5-formyl-5,6,7,8-tetrahydrofolate site. A TrmE-type G domain is found at 223-381; the sequence is GLNTVIVGKP…FKEVIKELFF (159 aa). Residue Asn233 coordinates K(+). Residues 233–238, 252–258, and 277–280 each bind GTP; these read NVGKSS, TDVPGTT, and DTAG. Residue Ser237 participates in Mg(2+) binding. K(+) is bound by residues Thr252, Val254, and Thr257. Thr258 provides a ligand contact to Mg(2+). (6S)-5-formyl-5,6,7,8-tetrahydrofolate is bound at residue Lys459.

It belongs to the TRAFAC class TrmE-Era-EngA-EngB-Septin-like GTPase superfamily. TrmE GTPase family. As to quaternary structure, homodimer. Heterotetramer of two MnmE and two MnmG subunits. The cofactor is K(+).

The protein resides in the cytoplasm. Functionally, exhibits a very high intrinsic GTPase hydrolysis rate. Involved in the addition of a carboxymethylaminomethyl (cmnm) group at the wobble position (U34) of certain tRNAs, forming tRNA-cmnm(5)s(2)U34. In Clostridium novyi (strain NT), this protein is tRNA modification GTPase MnmE.